A 605-amino-acid polypeptide reads, in one-letter code: Capsid scaffolding protein (605 aa).

Active-site charge relay system residues include histidine 48, serine 116, and histidine 139. Residues 235–275 are disordered; sequence ASDAPDLQKPDKALQSPPPASTDPDTMLSGNAGEGATACGG. Residues 281-300 form an interaction with pAP region; that stretch reads QDLISVPRNTFMTLLQTNLD. 2 disordered regions span residues 403–432 and 489–588; these read DYVPAPSRSNKRKRDPEEDEEGGGLFPGED and PHQS…KSVS. The short motif at 410 to 416 is the Nuclear localization signal element; the sequence is RSNKRKR. Positions 568–579 are enriched in polar residues; the sequence is ASASGVAQSKEP. The tract at residues 585–605 is interaction with major capsid protein; that stretch reads KSVSAHLKSIFCEELLNKRVA.

The protein belongs to the herpesviridae capsid scaffolding protein family. In terms of assembly, homomultimer. Interacts with major capsid protein. Exists in a monomer-dimer equilibrium with the dimer being the active species. In terms of processing, capsid scaffolding protein is cleaved by assemblin after formation of the spherical procapsid. As a result, the capsid obtains its mature, icosahedral shape. Cleavages occur at two or more sites: release (R-site) and maturation (M-site).

The protein localises to the host cytoplasm. It localises to the host nucleus. The catalysed reaction is Cleaves -Ala-|-Ser- and -Ala-|-Ala- bonds in the scaffold protein.. Acts as a scaffold protein by binding major capsid protein in the cytoplasm, inducing the nuclear localization of both proteins. Multimerizes in the nucleus such as major capsid protein forms the icosahedral T=16 capsid. Autocatalytic cleavage releases the assembly protein, and subsequently abolishes interaction with major capsid protein. Cleavages products are evicted from the capsid before or during DNA packaging. In terms of biological role, protease that plays an essential role in virion assembly within the nucleus. Catalyzes the cleavage of the assembly protein after formation of the spherical procapsid. By that cleavage, the capsid matures and gains its icosahedral shape. The cleavage sites seem to include -Ala-Ser-, -Ala-Ala-, as well as Ala-Thr bonds. Assemblin and cleavages products are evicted from the capsid before or during DNA packaging. Its function is as follows. Plays a major role in capsid assembly. Acts as a scaffold protein by binding major capsid protein. Multimerizes in the nucleus such as major capsid protein forms the icosahedral T=16 capsid. Cleaved by assemblin after capsid completion. The cleavages products are evicted from the capsid before or during DNA packaging. The chain is Capsid scaffolding protein from Epstein-Barr virus (strain AG876) (HHV-4).